We begin with the raw amino-acid sequence, 282 residues long: Sulfur carrier protein FdhD (282 aa).

The active-site Cysteine persulfide intermediate is the Cys-115.

It belongs to the FdhD family.

Its subcellular location is the cytoplasm. Required for formate dehydrogenase (FDH) activity. Acts as a sulfur carrier protein that transfers sulfur from IscS to the molybdenum cofactor prior to its insertion into FDH. The sequence is that of Sulfur carrier protein FdhD from Streptomyces avermitilis (strain ATCC 31267 / DSM 46492 / JCM 5070 / NBRC 14893 / NCIMB 12804 / NRRL 8165 / MA-4680).